A 326-amino-acid chain; its full sequence is Homoserine kinase (326 aa).

Belongs to the pseudomonas-type ThrB family.

The enzyme catalyses L-homoserine + ATP = O-phospho-L-homoserine + ADP + H(+). It functions in the pathway amino-acid biosynthesis; L-threonine biosynthesis; L-threonine from L-aspartate: step 4/5. This is Homoserine kinase from Sinorhizobium medicae (strain WSM419) (Ensifer medicae).